A 329-amino-acid chain; its full sequence is GTPase Obg (329 aa).

Residues 1-159 (MQFIDQARIT…WPLQLELKLL (159 aa)) form the Obg domain. An OBG-type G domain is found at 160-328 (AEVGIIGLPN…LLAETWVELG (169 aa)). Residues 166–173 (GLPNAGKS), 191–195 (FTTLV), 213–216 (DIPG), 280–283 (NKQE), and 309–311 (SAA) each bind ATP. Residues serine 173 and threonine 193 each contribute to the Mg(2+) site.

It belongs to the TRAFAC class OBG-HflX-like GTPase superfamily. OBG GTPase family. As to quaternary structure, monomer. Mg(2+) serves as cofactor.

It is found in the cytoplasm. An essential GTPase which binds GTP, GDP and possibly (p)ppGpp with moderate affinity, with high nucleotide exchange rates and a fairly low GTP hydrolysis rate. Plays a role in control of the cell cycle, stress response, ribosome biogenesis and in those bacteria that undergo differentiation, in morphogenesis control. The chain is GTPase Obg from Synechococcus sp. (strain CC9605).